An 85-amino-acid chain; its full sequence is Putative membrane protein insertion efficiency factor (85 aa).

The protein belongs to the UPF0161 family.

The protein resides in the cell inner membrane. Could be involved in insertion of integral membrane proteins into the membrane. This chain is Putative membrane protein insertion efficiency factor, found in Tolumonas auensis (strain DSM 9187 / NBRC 110442 / TA 4).